We begin with the raw amino-acid sequence, 356 residues long: MSTVTITDLARENVRNLTPYQSARRLGGNGDVWLNANEYPTAVEFQLTQQTLNRYPECQPKVVIENYAQYAGVKPEQVLVSRGADEGIELLIRAFCEQGKDAILYCPPTYGMYSVSAETIGVECRTVPTLDNWQLDLQGISDKLDGVKVVYVCSPNNPTGQLINPQDFRTLLELTRGKAIVVADEAYIEFCPQASLAGWLAEYPHLAILRTLSKAFALAGLRCGFTLANEEVINLLMKVIAPYPLSTPVADIAAQALSPQGIVAMRERVAQIITEREYLIAALKEIPCVEQVFDSETNYILARFKASSAVFKSLWDQGIILRDQNKQPSLSGCLRITVGTREESQCVIDALRAEQV.

Lys214 bears the N6-(pyridoxal phosphate)lysine mark.

Belongs to the class-II pyridoxal-phosphate-dependent aminotransferase family. Histidinol-phosphate aminotransferase subfamily. As to quaternary structure, homodimer. Pyridoxal 5'-phosphate serves as cofactor.

The catalysed reaction is L-histidinol phosphate + 2-oxoglutarate = 3-(imidazol-4-yl)-2-oxopropyl phosphate + L-glutamate. The protein operates within amino-acid biosynthesis; L-histidine biosynthesis; L-histidine from 5-phospho-alpha-D-ribose 1-diphosphate: step 7/9. The sequence is that of Histidinol-phosphate aminotransferase from Escherichia coli O1:K1 / APEC.